The following is a 2327-amino-acid chain: Pre-mRNA-processing-splicing factor 8 homolog (2327 aa).

The segment covering M1–S14 has biased composition (polar residues). The tract at residues M1–K20 is disordered. The interval T801–L1292 is reverse transcriptase homology domain. The linker stretch occupies residues N1293–F1566. The tract at residues M1502 to L1515 is important for branch point selection. The restriction endonuclease homology domain stretch occupies residues L1570–Q1740. The interval G1657 to T2023 is involved in interaction with pre-mRNA 5' splice site. The segment at N1755–S2008 is RNase H homology domain. One can recognise an MPN domain in the interval T2093–G2223.

As to quaternary structure, part of the U5 snRNP complex and of the U4/U6-U5 tri-snRNP complex.

The protein localises to the nucleus speckle. Functionally, functions as a scaffold that mediates the ordered assembly of spliceosomal proteins and snRNAs. Required for the assembly of the U4/U6-U5 tri-snRNP complex. Functions as a scaffold that positions spliceosomal U2, U5 and U6 snRNAs at splice sites on pre-mRNA substrates, so that splicing can occur. Interacts with both the 5' and the 3' splice site. The chain is Pre-mRNA-processing-splicing factor 8 homolog (prpf8) from Dictyostelium discoideum (Social amoeba).